The chain runs to 499 residues: Lysine--tRNA ligase (499 aa).

Residues Glu409 and Glu416 each coordinate Mg(2+).

Belongs to the class-II aminoacyl-tRNA synthetase family. As to quaternary structure, homodimer. Requires Mg(2+) as cofactor.

Its subcellular location is the cytoplasm. The catalysed reaction is tRNA(Lys) + L-lysine + ATP = L-lysyl-tRNA(Lys) + AMP + diphosphate. The chain is Lysine--tRNA ligase from Thioalkalivibrio sulfidiphilus (strain HL-EbGR7).